Consider the following 347-residue polypeptide: MIKLRKNIANMAGYVPGYQPEDPAAYIKLNTNENSYPPSPKVIEAIIAEVGEGLKRYPDAASRAAREAAAELYGFPPEWVIMANGSDEVLNNLIRAFADEGDEIAFVYPSYSYYATLAEVQGARVKTFGLTEDWKLKDFPKIYEGRIFFLTNPNAPLGFTFSQTYIEELAGRVSGTLVIDETYADFAEVTSLELVRKYDNVVVTRTFSKSYSLAGMRLGLAVARPEVISALDKIRDHYNLDRLAQAAAVAALHDQEYLRETVGKIQETRQWFCDQLGKLGYTVIPSHGNYVFATPPDRNGERIYQGLFDRKILVRHFSDPNLAHGLRISIGTQAEMEKTIVALVEIG.

Lysine 209 is subject to N6-(pyridoxal phosphate)lysine.

It belongs to the class-II pyridoxal-phosphate-dependent aminotransferase family. Histidinol-phosphate aminotransferase subfamily. As to quaternary structure, homodimer. Pyridoxal 5'-phosphate serves as cofactor.

The catalysed reaction is L-histidinol phosphate + 2-oxoglutarate = 3-(imidazol-4-yl)-2-oxopropyl phosphate + L-glutamate. It functions in the pathway amino-acid biosynthesis; L-histidine biosynthesis; L-histidine from 5-phospho-alpha-D-ribose 1-diphosphate: step 7/9. This chain is Histidinol-phosphate aminotransferase, found in Geotalea daltonii (strain DSM 22248 / JCM 15807 / FRC-32) (Geobacter daltonii).